Consider the following 213-residue polypeptide: Orotate phosphoribosyltransferase (213 aa).

Lys26 is a binding site for 5-phospho-alpha-D-ribose 1-diphosphate. 34 to 35 (FF) provides a ligand contact to orotate. Residues 72–73 (YK), Arg99, Lys100, Lys103, His105, and 124–132 (DDVITAGTA) contribute to the 5-phospho-alpha-D-ribose 1-diphosphate site. Orotate-binding residues include Thr128 and Arg156.

Belongs to the purine/pyrimidine phosphoribosyltransferase family. PyrE subfamily. In terms of assembly, homodimer. The cofactor is Mg(2+).

It catalyses the reaction orotidine 5'-phosphate + diphosphate = orotate + 5-phospho-alpha-D-ribose 1-diphosphate. It participates in pyrimidine metabolism; UMP biosynthesis via de novo pathway; UMP from orotate: step 1/2. Functionally, catalyzes the transfer of a ribosyl phosphate group from 5-phosphoribose 1-diphosphate to orotate, leading to the formation of orotidine monophosphate (OMP). The sequence is that of Orotate phosphoribosyltransferase from Vibrio vulnificus (strain CMCP6).